A 765-amino-acid chain; its full sequence is Putative U-box domain-containing protein 50 (765 aa).

A coiled-coil region spans residues 198–391 (QEIENYFQQL…NRRIEFCKER (194 aa)). Residues 422–765 (SDRLRLKSGG…HSKRAAQASS (344 aa)) form the Protein kinase domain. ATP contacts are provided by residues 428-436 (KSGGNWTNV) and lysine 449. The region spanning 688-762 (DIPSVFMCPI…QDWHSKRAAQ (75 aa)) is the U-box domain.

Belongs to the protein kinase superfamily. Ser/Thr protein kinase family.

The catalysed reaction is S-ubiquitinyl-[E2 ubiquitin-conjugating enzyme]-L-cysteine + [acceptor protein]-L-lysine = [E2 ubiquitin-conjugating enzyme]-L-cysteine + N(6)-ubiquitinyl-[acceptor protein]-L-lysine.. It functions in the pathway protein modification; protein ubiquitination. Its function is as follows. Functions as an E3 ubiquitin ligase. This Arabidopsis thaliana (Mouse-ear cress) protein is Putative U-box domain-containing protein 50 (PUB50).